Reading from the N-terminus, the 217-residue chain is CASP-like protein UU4 (217 aa).

Over residues 1–11 (MYTGQSDHRPE) the composition is skewed to basic and acidic residues. Residues 1–21 (MYTGQSDHRPEGVGVNPGSPN) are disordered. The Cytoplasmic portion of the chain corresponds to 1 to 61 (MYTGQSDHRP…VKKNINHMSG (61 aa)). Residues 62–82 (LSLGLRVSEFVLSVIAFSLMA) form a helical membrane-spanning segment. Residues 83–98 (SAEQNGAVYSTFTSYS) lie on the Extracellular side of the membrane. Residues 99–119 (FVLAINVLVALYAIGQIILSV) form a helical membrane-spanning segment. Residues 120-141 (MPLVSGSAPKKLYLFITFGCDQ) are Cytoplasmic-facing. A helical transmembrane segment spans residues 142 to 162 (LSAFLLMAAGAAGASVAMLIN). At 163–187 (RKGVIDDYGSGCIDGKITVFCAHAE) the chain is on the extracellular side. The helical transmembrane segment at 188 to 208 (ASIAFTFLSFFCVMISSYLGV) threads the bilayer. At 209 to 217 (YNLAPYLIL) the chain is on the cytoplasmic side.

Belongs to the Casparian strip membrane proteins (CASP) family. As to quaternary structure, homodimer and heterodimers.

It localises to the cell membrane. This chain is CASP-like protein UU4, found in Physcomitrium patens (Spreading-leaved earth moss).